The sequence spans 269 residues: Hydroxyethylthiazole kinase (269 aa).

Substrate is bound at residue Met-45. Arg-121 and Thr-167 together coordinate ATP. Gly-194 serves as a coordination point for substrate.

This sequence belongs to the Thz kinase family. Requires Mg(2+) as cofactor.

The catalysed reaction is 5-(2-hydroxyethyl)-4-methylthiazole + ATP = 4-methyl-5-(2-phosphooxyethyl)-thiazole + ADP + H(+). It participates in cofactor biosynthesis; thiamine diphosphate biosynthesis; 4-methyl-5-(2-phosphoethyl)-thiazole from 5-(2-hydroxyethyl)-4-methylthiazole: step 1/1. Catalyzes the phosphorylation of the hydroxyl group of 4-methyl-5-beta-hydroxyethylthiazole (THZ). The chain is Hydroxyethylthiazole kinase from Bacillus mycoides (strain KBAB4) (Bacillus weihenstephanensis).